Reading from the N-terminus, the 136-residue chain is 5-hydroxyisourate hydrolase (136 aa).

A signal peptide spans 1–20 (MKRYILATAIASLVAAPAMA). Substrate is bound by residues His-31, Arg-69, and Tyr-133.

The protein belongs to the transthyretin family. 5-hydroxyisourate hydrolase subfamily. In terms of assembly, homotetramer.

The protein localises to the periplasm. The enzyme catalyses 5-hydroxyisourate + H2O = 5-hydroxy-2-oxo-4-ureido-2,5-dihydro-1H-imidazole-5-carboxylate + H(+). Catalyzes the hydrolysis of 5-hydroxyisourate (HIU) to 2-oxo-4-hydroxy-4-carboxy-5-ureidoimidazoline (OHCU). This chain is 5-hydroxyisourate hydrolase (hiuH), found in Salmonella typhi.